The sequence spans 225 residues: Small ribosomal subunit protein uS3 (225 aa).

The KH type-2 domain occupies 38 to 106; sequence LRAFLRRKLS…DVALNIVEIR (69 aa).

It belongs to the universal ribosomal protein uS3 family. As to quaternary structure, part of the 30S ribosomal subunit. Forms a tight complex with proteins S10 and S14.

In terms of biological role, binds the lower part of the 30S subunit head. Binds mRNA in the 70S ribosome, positioning it for translation. This Gluconobacter oxydans (strain 621H) (Gluconobacter suboxydans) protein is Small ribosomal subunit protein uS3.